Here is a 448-residue protein sequence, read N- to C-terminus: tRNA(Ile)-lysidine synthase (448 aa).

28-33 (STGVDS) serves as a coordination point for ATP.

It belongs to the tRNA(Ile)-lysidine synthase family.

The protein resides in the cytoplasm. The catalysed reaction is cytidine(34) in tRNA(Ile2) + L-lysine + ATP = lysidine(34) in tRNA(Ile2) + AMP + diphosphate + H(+). Its function is as follows. Ligates lysine onto the cytidine present at position 34 of the AUA codon-specific tRNA(Ile) that contains the anticodon CAU, in an ATP-dependent manner. Cytidine is converted to lysidine, thus changing the amino acid specificity of the tRNA from methionine to isoleucine. The chain is tRNA(Ile)-lysidine synthase from Lactiplantibacillus plantarum (strain ATCC BAA-793 / NCIMB 8826 / WCFS1) (Lactobacillus plantarum).